The sequence spans 591 residues: Isocitrate dehydrogenase kinase/phosphatase (591 aa).

ATP contacts are provided by residues 315 to 321 (APGVKGM) and Lys336. Asp371 is a catalytic residue.

Belongs to the AceK family.

Its subcellular location is the cytoplasm. It carries out the reaction L-seryl-[isocitrate dehydrogenase] + ATP = O-phospho-L-seryl-[isocitrate dehydrogenase] + ADP + H(+). Bifunctional enzyme which can phosphorylate or dephosphorylate isocitrate dehydrogenase (IDH) on a specific serine residue. This is a regulatory mechanism which enables bacteria to bypass the Krebs cycle via the glyoxylate shunt in response to the source of carbon. When bacteria are grown on glucose, IDH is fully active and unphosphorylated, but when grown on acetate or ethanol, the activity of IDH declines drastically concomitant with its phosphorylation. This Pectobacterium atrosepticum (strain SCRI 1043 / ATCC BAA-672) (Erwinia carotovora subsp. atroseptica) protein is Isocitrate dehydrogenase kinase/phosphatase.